The primary structure comprises 237 residues: 2-C-methyl-D-erythritol 4-phosphate cytidylyltransferase (237 aa).

This sequence belongs to the IspD/TarI cytidylyltransferase family. IspD subfamily.

It catalyses the reaction 2-C-methyl-D-erythritol 4-phosphate + CTP + H(+) = 4-CDP-2-C-methyl-D-erythritol + diphosphate. The protein operates within isoprenoid biosynthesis; isopentenyl diphosphate biosynthesis via DXP pathway; isopentenyl diphosphate from 1-deoxy-D-xylulose 5-phosphate: step 2/6. Its function is as follows. Catalyzes the formation of 4-diphosphocytidyl-2-C-methyl-D-erythritol from CTP and 2-C-methyl-D-erythritol 4-phosphate (MEP). The chain is 2-C-methyl-D-erythritol 4-phosphate cytidylyltransferase from Vibrio vulnificus (strain YJ016).